The following is a 569-amino-acid chain: Proline--tRNA ligase (569 aa).

The protein belongs to the class-II aminoacyl-tRNA synthetase family. ProS type 1 subfamily. As to quaternary structure, homodimer.

The protein resides in the cytoplasm. The catalysed reaction is tRNA(Pro) + L-proline + ATP = L-prolyl-tRNA(Pro) + AMP + diphosphate. Functionally, catalyzes the attachment of proline to tRNA(Pro) in a two-step reaction: proline is first activated by ATP to form Pro-AMP and then transferred to the acceptor end of tRNA(Pro). As ProRS can inadvertently accommodate and process non-cognate amino acids such as alanine and cysteine, to avoid such errors it has two additional distinct editing activities against alanine. One activity is designated as 'pretransfer' editing and involves the tRNA(Pro)-independent hydrolysis of activated Ala-AMP. The other activity is designated 'posttransfer' editing and involves deacylation of mischarged Ala-tRNA(Pro). The misacylated Cys-tRNA(Pro) is not edited by ProRS. This is Proline--tRNA ligase from Legionella pneumophila (strain Lens).